Consider the following 414-residue polypeptide: MALISLAIDYKKSPIEVRSEFALSGLDVSMLYRSILAIDNVVHAVILSTCNRTEVYLEISDLRVVDDILVWWQGYVRNPNYKIKDYFKLRQGTEVIMHLMKLACGLESMVLGEPQILGQVKDSYTLSKKNHAIGKELDRVFQKVFATAKRVRSETRIGYCPVSVAFSAITLAKRQLDNISSKNVLIIGAGQTGELLFRHVTALAPKQIMLANRTIEKAQKITSVFRNASAHYLSELPQLIKKADIIIAAVNVLEYIVTCKYVGDKPRVFIDISIPQALDPKLGELEQNVYYCVDDINAVIEDNKDKRKYESSKAQKIIVKSLEEYLEKEKAIISNSAIKELFQKADGLVDLSLEKSLAKIRNGKDAEEIIKRFAYEIKKKVLHYPVVGMKEASKQGRSDCLVCMKRMFGLNVEK.

Residues 49–52 (TCNR), Ser108, 113–115 (EPQ), and Gln119 contribute to the substrate site. Catalysis depends on Cys50, which acts as the Nucleophile. NADP(+) is bound at residue 188 to 193 (GAGQTG).

This sequence belongs to the glutamyl-tRNA reductase family. Homodimer.

The enzyme catalyses (S)-4-amino-5-oxopentanoate + tRNA(Glu) + NADP(+) = L-glutamyl-tRNA(Glu) + NADPH + H(+). Its pathway is porphyrin-containing compound metabolism; protoporphyrin-IX biosynthesis; 5-aminolevulinate from L-glutamyl-tRNA(Glu): step 1/2. Functionally, catalyzes the NADPH-dependent reduction of glutamyl-tRNA(Glu) to glutamate 1-semialdehyde (GSA). In Francisella tularensis subsp. holarctica (strain LVS), this protein is Glutamyl-tRNA reductase.